A 217-amino-acid chain; its full sequence is Guanylate kinase (217 aa).

Positions 10 to 190 constitute a Guanylate kinase-like domain; sequence GLLIILSSPS…TEEALKTIIT (181 aa). Residue 17–24 participates in ATP binding; it reads SPSGAGKS.

It belongs to the guanylate kinase family.

The protein resides in the cytoplasm. The catalysed reaction is GMP + ATP = GDP + ADP. Functionally, essential for recycling GMP and indirectly, cGMP. The chain is Guanylate kinase from Ruegeria sp. (strain TM1040) (Silicibacter sp.).